The chain runs to 257 residues: 3-deoxy-manno-octulosonate cytidylyltransferase (257 aa).

It belongs to the KdsB family.

Its subcellular location is the cytoplasm. It carries out the reaction 3-deoxy-alpha-D-manno-oct-2-ulosonate + CTP = CMP-3-deoxy-beta-D-manno-octulosonate + diphosphate. Its pathway is nucleotide-sugar biosynthesis; CMP-3-deoxy-D-manno-octulosonate biosynthesis; CMP-3-deoxy-D-manno-octulosonate from 3-deoxy-D-manno-octulosonate and CTP: step 1/1. The protein operates within bacterial outer membrane biogenesis; lipopolysaccharide biosynthesis. Its function is as follows. Activates KDO (a required 8-carbon sugar) for incorporation into bacterial lipopolysaccharide in Gram-negative bacteria. The sequence is that of 3-deoxy-manno-octulosonate cytidylyltransferase from Rhodospirillum centenum (strain ATCC 51521 / SW).